We begin with the raw amino-acid sequence, 213 residues long: Orotate phosphoribosyltransferase (213 aa).

K26 is a binding site for 5-phospho-alpha-D-ribose 1-diphosphate. 34 to 35 (FF) contacts orotate. 5-phospho-alpha-D-ribose 1-diphosphate contacts are provided by residues 72 to 73 (YK), R98, K99, K102, and 123 to 131 (DDVISAGTS). Positions 127 and 155 each coordinate orotate.

It belongs to the purine/pyrimidine phosphoribosyltransferase family. PyrE subfamily. Homodimer. The cofactor is Mg(2+).

It catalyses the reaction orotidine 5'-phosphate + diphosphate = orotate + 5-phospho-alpha-D-ribose 1-diphosphate. The protein operates within pyrimidine metabolism; UMP biosynthesis via de novo pathway; UMP from orotate: step 1/2. Catalyzes the transfer of a ribosyl phosphate group from 5-phosphoribose 1-diphosphate to orotate, leading to the formation of orotidine monophosphate (OMP). The protein is Orotate phosphoribosyltransferase of Neisseria gonorrhoeae (strain ATCC 700825 / FA 1090).